Here is a 599-residue protein sequence, read N- to C-terminus: Group II intron-encoded protein LtrA (599 aa).

The Reverse transcriptase domain maps to 70–361 (IIQSLKDGTY…QPARFLGYDI (292 aa)). An intron maturase type-2 region spans residues 381–549 (NGSVELLIPL…AKCCELCGTS (169 aa)).

This sequence in the N-terminal section; belongs to the bacterial reverse transcriptase family. As to quaternary structure, homodimer. Mg(2+) is required as a cofactor.

It carries out the reaction DNA(n) + a 2'-deoxyribonucleoside 5'-triphosphate = DNA(n+1) + diphosphate. Functionally, multifunctional protein that promotes group II intron splicing and mobility by acting both on RNA and DNA. It has three activities: reverse transcriptase (RT) for intron duplication, maturase to promote splicing, and DNA endonuclease for site-specific cleavage of recipient alleles. The intron-encoded protein promotes splicing by facilitating the formation of the catalytically active structure of the intron RNA. After splicing, the protein remains bound to the excised intron lariat RNA, forming ribonucleoprotein particles, and cleaving the antisense strand of the recipient DNA in the 3' exon. After DNA cleavage, retrohoming occurs by a target DNA-primed reverse transcription of the intron RNA that had reverse spliced into the sense strand of the recipient DNA. It also contributes to the recognition of the DNA target site and acts as a repressor of its own translation. This is Group II intron-encoded protein LtrA (ltrA) from Lactococcus lactis subsp. cremoris (Streptococcus cremoris).